A 451-amino-acid polypeptide reads, in one-letter code: Tubulin beta-4 chain (451 aa).

Residues Q11, E69, S138, G142, T143, G144, N204, and N226 each contribute to the GTP site. E69 contacts Mg(2+). Residues 417 to 427 (DLVSEYQQYQD) show a composition bias toward polar residues. Residues 417–451 (DLVSEYQQYQDATAEEEGEYDEDDGGYGDEDDGMM) form a disordered region. Residues 429 to 451 (TAEEEGEYDEDDGGYGDEDDGMM) are compositionally biased toward acidic residues.

The protein belongs to the tubulin family. Dimer of alpha and beta chains. A typical microtubule is a hollow water-filled tube with an outer diameter of 25 nm and an inner diameter of 15 nM. Alpha-beta heterodimers associate head-to-tail to form protofilaments running lengthwise along the microtubule wall with the beta-tubulin subunit facing the microtubule plus end conferring a structural polarity. Microtubules usually have 13 protofilaments but different protofilament numbers can be found in some organisms and specialized cells. It depends on Mg(2+) as a cofactor.

Its subcellular location is the cytoplasm. The protein localises to the cytoskeleton. Its function is as follows. Tubulin is the major constituent of microtubules, a cylinder consisting of laterally associated linear protofilaments composed of alpha- and beta-tubulin heterodimers. Microtubules grow by the addition of GTP-tubulin dimers to the microtubule end, where a stabilizing cap forms. Below the cap, tubulin dimers are in GDP-bound state, owing to GTPase activity of alpha-tubulin. The protein is Tubulin beta-4 chain (TUBB4) of Oomycete-like sp. (strain MacKay2000).